Reading from the N-terminus, the 350-residue chain is Quinolinate phosphoribosyltransferase [decarboxylating] 1 (350 aa).

Residues Arg-141, 172 to 174, Arg-196, Lys-206, Glu-239, Asp-266, 298 to 300, and 319 to 321 contribute to the substrate site; these read TRK, SGN, and SGA.

Belongs to the NadC/ModD family.

The enzyme catalyses nicotinate beta-D-ribonucleotide + CO2 + diphosphate = quinolinate + 5-phospho-alpha-D-ribose 1-diphosphate + 2 H(+). The protein operates within alkaloid biosynthesis; nicotine biosynthesis. It participates in cofactor biosynthesis; NAD(+) biosynthesis; nicotinate D-ribonucleotide from quinolinate: step 1/1. Its function is as follows. Involved in the biosynthesis of pyridine alkaloid natural products, leading mainly to the production of anabasine, anatabine, nicotine and nornicotine, effective deterrents against herbivores with antiparasitic and pesticide properties (neurotoxins); nornicotine serves as the precursor in the synthesis of the carcinogen compound N'-nitrosonornicotine (NNN). Involved in the catabolism of quinolinic acid (QA). This is Quinolinate phosphoribosyltransferase [decarboxylating] 1 from Nicotiana glauca (Glaucous tobacco).